The chain runs to 319 residues: tRNA uridine(34) hydroxylase (319 aa).

A Rhodanese domain is found at 127–221; sequence KQEDTVIIDA…YGKDPEVQGE (95 aa). The active-site Cysteine persulfide intermediate is Cys181.

This sequence belongs to the TrhO family.

It catalyses the reaction uridine(34) in tRNA + AH2 + O2 = 5-hydroxyuridine(34) in tRNA + A + H2O. Catalyzes oxygen-dependent 5-hydroxyuridine (ho5U) modification at position 34 in tRNAs. In Bacillus cereus (strain B4264), this protein is tRNA uridine(34) hydroxylase.